Reading from the N-terminus, the 138-residue chain is UPF0047 protein YjbQ (138 aa).

It belongs to the UPF0047 family.

The chain is UPF0047 protein YjbQ (yjbQ) from Escherichia coli O157:H7.